A 161-amino-acid polypeptide reads, in one-letter code: Phosphopantetheine adenylyltransferase (161 aa).

Thr9 is a substrate binding site. ATP-binding positions include 9-10 (TF) and His17. The substrate site is built by Lys41, Leu73, and Arg87. ATP-binding positions include 88–90 (GLR), Glu98, and 123–129 (YQFISGT).

The protein belongs to the bacterial CoaD family. As to quaternary structure, homohexamer. Mg(2+) serves as cofactor.

It localises to the cytoplasm. It catalyses the reaction (R)-4'-phosphopantetheine + ATP + H(+) = 3'-dephospho-CoA + diphosphate. The protein operates within cofactor biosynthesis; coenzyme A biosynthesis; CoA from (R)-pantothenate: step 4/5. Functionally, reversibly transfers an adenylyl group from ATP to 4'-phosphopantetheine, yielding dephospho-CoA (dPCoA) and pyrophosphate. This Cupriavidus taiwanensis (strain DSM 17343 / BCRC 17206 / CCUG 44338 / CIP 107171 / LMG 19424 / R1) (Ralstonia taiwanensis (strain LMG 19424)) protein is Phosphopantetheine adenylyltransferase.